Here is a 410-residue protein sequence, read N- to C-terminus: Putative ankyrin repeat protein FPV240 (410 aa).

ANK repeat units lie at residues 33–62 (NGYS…YPDY), 66–95 (DIES…FIND), 100–129 (KGNT…DTDV), 133–162 (DRFT…CTNI), 166–195 (YGCT…NIDY), and 200–229 (PCVT…DSNI).

In Vertebrata (FPV), this protein is Putative ankyrin repeat protein FPV240.